Reading from the N-terminus, the 1201-residue chain is DNA-directed RNA polymerase subunit beta' (1201 aa).

Residues Cys60, Cys62, Cys75, and Cys78 each contribute to the Zn(2+) site. Mg(2+) contacts are provided by Asp449, Asp451, and Asp453. Positions 818, 892, 899, and 902 each coordinate Zn(2+).

This sequence belongs to the RNA polymerase beta' chain family. As to quaternary structure, the RNAP catalytic core consists of 2 alpha, 1 beta, 1 beta' and 1 omega subunit. When a sigma factor is associated with the core the holoenzyme is formed, which can initiate transcription. Requires Mg(2+) as cofactor. Zn(2+) serves as cofactor.

It carries out the reaction RNA(n) + a ribonucleoside 5'-triphosphate = RNA(n+1) + diphosphate. Functionally, DNA-dependent RNA polymerase catalyzes the transcription of DNA into RNA using the four ribonucleoside triphosphates as substrates. The polypeptide is DNA-directed RNA polymerase subunit beta' (Listeria monocytogenes serovar 1/2a (strain ATCC BAA-679 / EGD-e)).